Here is a 384-residue protein sequence, read N- to C-terminus: Probable peptidoglycan glycosyltransferase FtsW (384 aa).

Topologically, residues 1 to 19 (MAAVWRWFVPERPSFYDRG) are cytoplasmic. Residues 20–40 (LLALTFSLMGIGLMMVASASI) traverse the membrane as a helical segment. The Periplasmic segment spans residues 41 to 54 (KEGPGGDMFYFTKR). The chain crosses the membrane as a helical span at residues 55 to 75 (HLIFLFVCLGIGVGTLYLPLE). Residues 76–83 (RWREWSGR) lie on the Cytoplasmic side of the membrane. The helical transmembrane segment at 84 to 104 (LLVGALGLLFAVLAVGRTVNG) threads the bilayer. Over 105–110 (AKRWIG) the chain is Periplasmic. The chain crosses the membrane as a helical span at residues 111-131 (FGFFNIQPAELAKLALIVFIA). Residues 132–143 (SYLVRRSDEVRG) are Cytoplasmic-facing. A helical transmembrane segment spans residues 144-164 (NIAGFVKPLAVVFLLAIMLLA). Residues 165–166 (QP) lie on the Periplasmic side of the membrane. Residues 167–187 (DLGSVVVLFVCTFGLLFIGGA) traverse the membrane as a helical segment. Position 188 (lysine 188) is a topological domain, cytoplasmic. Residues 189–209 (LVQFIAIIVAGLSALAGLIIY) form a helical membrane-spanning segment. Topologically, residues 210-267 (EPYRLRRVTSFLDPWADPFGSGYQLTQSLMAFGRGGFFGQGLGNSVQKLSYLPEAHTD) are periplasmic. Residues 268–288 (FVFAILGEELGYFGVLVVLFL) form a helical membrane-spanning segment. The Cytoplasmic segment spans residues 289–316 (QLLLAMKALQIGRTALLRSKFFEGYMAC). The chain crosses the membrane as a helical span at residues 317 to 337 (GIGIWFSFQTVVNVGAAAGML). At 338-343 (PTKGLT) the chain is on the periplasmic side. A helical transmembrane segment spans residues 344-364 (LPLVSYGGSSLIAITMAVAIL). The Cytoplasmic portion of the chain corresponds to 365-384 (LRIDFERRLDTSHVIQREAA).

This sequence belongs to the SEDS family. FtsW subfamily.

The protein resides in the cell inner membrane. It carries out the reaction [GlcNAc-(1-&gt;4)-Mur2Ac(oyl-L-Ala-gamma-D-Glu-L-Lys-D-Ala-D-Ala)](n)-di-trans,octa-cis-undecaprenyl diphosphate + beta-D-GlcNAc-(1-&gt;4)-Mur2Ac(oyl-L-Ala-gamma-D-Glu-L-Lys-D-Ala-D-Ala)-di-trans,octa-cis-undecaprenyl diphosphate = [GlcNAc-(1-&gt;4)-Mur2Ac(oyl-L-Ala-gamma-D-Glu-L-Lys-D-Ala-D-Ala)](n+1)-di-trans,octa-cis-undecaprenyl diphosphate + di-trans,octa-cis-undecaprenyl diphosphate + H(+). It participates in cell wall biogenesis; peptidoglycan biosynthesis. In terms of biological role, peptidoglycan polymerase that is essential for cell division. This is Probable peptidoglycan glycosyltransferase FtsW from Tolumonas auensis (strain DSM 9187 / NBRC 110442 / TA 4).